The following is a 315-amino-acid chain: Fructose-1,6-bisphosphatase class 1 (315 aa).

Mg(2+)-binding residues include Glu90, Asp111, Leu113, and Asp114. Substrate-binding positions include 114 to 117, Tyr222, and Lys253; that span reads DGSS. Residue Glu259 coordinates Mg(2+).

This sequence belongs to the FBPase class 1 family. Homotetramer. Mg(2+) serves as cofactor.

It is found in the cytoplasm. It carries out the reaction beta-D-fructose 1,6-bisphosphate + H2O = beta-D-fructose 6-phosphate + phosphate. The protein operates within carbohydrate biosynthesis; gluconeogenesis. The sequence is that of Fructose-1,6-bisphosphatase class 1 from Trichlorobacter lovleyi (strain ATCC BAA-1151 / DSM 17278 / SZ) (Geobacter lovleyi).